An 80-amino-acid chain; its full sequence is Serine palmitoyltransferase small subunit A-B (80 aa).

Over 1 to 21 the chain is Cytoplasmic; sequence MKVSCEDVNGPRSSLGRAWNH. The helical transmembrane segment at 22–38 threads the bilayer; that stretch reads VSWLYYQYLLVTALYML. Residues 39 to 43 are Lumenal-facing; sequence EPWER. A helical membrane pass occupies residues 44-66; the sequence is TVFNSMLVSIVGMALYTGYIFMP. Residues 67 to 80 are Cytoplasmic-facing; sequence QHILAILHYFEIVQ.

This sequence belongs to the SPTSS family. SPTSSA subfamily. Component of the serine palmitoyltransferase (SPT) complex, which is composed of SPTLC1, SPTLC2 or SPTLC3 and SPTSSA or SPTSSB. The heterodimer consisting of SPTLC1 and SPTLC2/SPTLC3 forms the catalytic core of the enzyme, while SPTSSA or SPTSSB subunits determine substrate specificity. SPT also interacts with ORMDL proteins, especially ORMDL3, which negatively regulate SPT activity in the presence of ceramides.

It localises to the endoplasmic reticulum membrane. It functions in the pathway lipid metabolism; sphingolipid metabolism. Component of the serine palmitoyltransferase multisubunit enzyme (SPT) that catalyzes the initial and rate-limiting step in sphingolipid biosynthesis by condensing L-serine and activated acyl-CoA (most commonly palmitoyl-CoA) to form long-chain bases. The SPT complex is composed of SPTLC1, SPTLC2 or SPTLC3 and SPTSSA or SPTSSB. Within this complex, the heterodimer consisting of SPTLC1 and SPTLC2/SPTLC3 forms the catalytic core. Within the SPT complex, SPTSSA stimulates the catalytic activity and plays a role in substrate specificity, which depends upon the overall complex composition. The SPTLC1-SPTLC2-SPTSSA complex shows a strong preference for C16-CoA substrate, while the SPTLC1-SPTLC3-SPTSSA isozyme uses both C14-CoA and C16-CoA as substrates, with a slight preference for C14-CoA. Independently of its action as a SPT component, may be involved in MBOAT7 localization to mitochondria-associated membranes, a membrane bridge between the endoplasmic reticulum and mitochondria, may hence affect MBOAT7-catalyzed incorporation of arachidonic acid into phosphatidylinositol. This Xenopus laevis (African clawed frog) protein is Serine palmitoyltransferase small subunit A-B (sptssa-b).